Consider the following 558-residue polypeptide: Leucine-rich repeat-containing protein 71 (558 aa).

Low complexity predominate over residues 1–18 (MSSEPSTTGTSPRTPRPG). 2 disordered regions span residues 1–55 (MSSE…NPEE) and 86–112 (RVQQ…SASC). The segment covering 28 to 38 (KKGDRAAKDKT) has biased composition (basic and acidic residues). The span at 86 to 99 (RVQQSSVPSASTSE) shows a compositional bias: polar residues. LRR repeat units lie at residues 196–216 (TLRK…SKLM), 221–241 (TIVH…QLLG), 253–274 (TLVS…YIAD), and 281–302 (SLLW…KLAE). Positions 325–415 (GTQERSRSPS…DAAKAGKGKV (91 aa)) are disordered. 2 stretches are compositionally biased toward basic and acidic residues: residues 339-348 (GDSKAEREKS) and 380-391 (KTGEVVKKEEKL).

This chain is Leucine-rich repeat-containing protein 71 (Lrrc71), found in Mus musculus (Mouse).